The chain runs to 1154 residues: MEQPLGDMSPWHPDNHMDPEPPTKRRRFLADPDEASSDPVAHDSSPLPPSKRFFENEDETVPKTERLETIDEKPNNASPKSSSTELPTSQQEPSPSFDQETFETFIGDKVSEDVLSAIRSNCGNNIERAVNMYFDGTYKKFMKKSTRPAPPRPAASSSRTPNVSGERTIPIQTSKRMPNERYIGAFGVEGWATRSGTNLLKHGDIVKIERQKRAPPPTKSKGKAGPVTPSRGFGAPRRQDVVVRFTTQSGTEVGRLAREAANWVSALIDEKICRFEGTVVYAPERLRTNDTIFLQLRCSLLNSAFFSRPFQLADDRSAAFFNQNETNDEKTLRMRQVALVKLFQEINLHPTLTNSATKDGRKGLLQAAEQDEEKQKEVKKSDGNGTNNTKEANSSQSSDTEDGEELEQDQLDALYKKAQSFDFNTPEAEPADTFAMTLRKYQKQALHWMMAKEKDEKSHREPLMHPLWEQYEWPLKDVDENDLPQIEGQSKFYVNPYSGDLSLDFPVQEQHCLGGILADEMGLGKTIQMLSLVHTHRSEVALEARQSVVARSNVNQLTRLGKNSESILDAPCTTLVVAPMSLLSQWQSEAEKASKDGTMKTELYYGNEKSSNLQALCCASNAANAPDLVITSYGVVLSEFSSLAARNGDKSFHNGLFSLRFFRIIIDEAHHIKNRSSKTSKACYEISATHRWALTGTPIVNKLEDLFSLVRFLGVEPWNNFSFWRTFITVPFESGDFMRALDVVQTVLEPLVLRRTKDMKTPDGEPLVLLPPKQIEIVNVELSETERDVYNYIFNKAKRTFSQNVEAGTVMKAFTTIFAQILRLRQSCCHPILVRNRDIVADEVEAGAAADAAAGLADDMDLESLITSFTAVTDKASKESNQTFGAHALEQIRDEAENECPLCFEEPMNDQTVTGCWHSACKKCLLDYIKHQTDKAEVPRCFSCREPINKRDLFEVVRHDDDSDMMSKKPRISLQRVGVNASSAKVVALMSELRALRREHPKMKSVVFSQFTSFLSLIEPALTRANIKFLRLDGSMAQKARAAVLNEFTEKKGFTILLLSLRAGGVGLNLTSAGRVFMMDPWWSFAVEAQAIDRVHRMGQEAEVQVKRFVVKESVEERMLKVQERKKFIATSLGMMNDEEKKLQRIEDIKELLS.

4 disordered regions span residues 1 to 98 (MEQP…PSFD), 143 to 167 (KKST…SGER), 211 to 235 (QKRA…GFGA), and 367 to 407 (AAEQ…EELE). Basic and acidic residues-rich tracts occupy residues 13–23 (PDNHMDPEPPT) and 52–74 (RFFE…DEKP). Residues 75–98 (NNASPKSSSTELPTSQQEPSPSFD) are compositionally biased toward polar residues. Positions 373-382 (EKQKEVKKSD) are enriched in basic and acidic residues. The segment covering 383–398 (GNGTNNTKEANSSQSS) has biased composition (polar residues). Residues 506–716 (PVQEQHCLGG…FSLVRFLGVE (211 aa)) form the Helicase ATP-binding domain. 519–526 (DEMGLGKT) provides a ligand contact to ATP. The DEAH box signature appears at 667–670 (DEAH). The RING-type zinc finger occupies 900-945 (CPLCFEEPMNDQTVTGCWHSACKKCLLDYIKHQTDKAEVPRCFSCR). The Helicase C-terminal domain maps to 988 to 1144 (ALMSELRALR…MMNDEEKKLQ (157 aa)).

It belongs to the SNF2/RAD54 helicase family.

It is found in the cytoplasm. Its subcellular location is the nucleus. In terms of biological role, probable helicase, member of the UBC2/RAD6 epistasis group. Functions with DNA repair protein RAD18 in error-free postreplication DNA repair. Involved in the maintenance of wild-type rates of instability of simple repetitive sequences such as poly(GT) repeats. Seems to be involved in maintaining a balance which acts in favor of error-prone non-homologous joining during DNA double-strand breaks repairs. This Gibberella zeae (strain ATCC MYA-4620 / CBS 123657 / FGSC 9075 / NRRL 31084 / PH-1) (Wheat head blight fungus) protein is DNA repair protein RAD5 (RAD5).